We begin with the raw amino-acid sequence, 311 residues long: Protein lifeguard 3 (311 aa).

Disordered regions lie at residues M1–P37 and P50–G72. Residues Y53 to P62 are compositionally biased toward pro residues. A phosphoserine mark is found at S81 and S83. 7 helical membrane-spanning segments follow: residues L110 to V130, V134 to C154, I165 to M185, A190 to F210, G221 to L241, V246 to A266, and I286 to L306.

The protein belongs to the BI1 family. LFG subfamily.

It is found in the membrane. It localises to the lysosome membrane. Its subcellular location is the endosome membrane. Its function is as follows. Negatively regulates aortic matrix metalloproteinase-9 (MMP9) production and may play a protective role in vascular remodeling. The polypeptide is Protein lifeguard 3 (TMBIM1) (Homo sapiens (Human)).